A 178-amino-acid chain; its full sequence is Ribosome maturation factor RimP (178 aa).

Belongs to the RimP family.

The protein resides in the cytoplasm. Its function is as follows. Required for maturation of 30S ribosomal subunits. The sequence is that of Ribosome maturation factor RimP from Corynebacterium glutamicum (strain ATCC 13032 / DSM 20300 / JCM 1318 / BCRC 11384 / CCUG 27702 / LMG 3730 / NBRC 12168 / NCIMB 10025 / NRRL B-2784 / 534).